A 456-amino-acid chain; its full sequence is Ribonuclease inhibitor (456 aa).

Methionine 1 bears the N-acetylmethionine mark. 15 LRR repeats span residues 15–43 (WTEL…CKDI), 44–71 (SSAV…VGLV), 72–100 (LQGL…CGIL), 101–128 (PGML…LKLL), 129–157 (CEGL…CEPL), 158–185 (ASVL…VRIL), 186–214 (CQGL…CKDL), 215–242 (CDVV…IAAL), 243–271 (CPGL…CKDL), 272–299 (CRVL…ARLL), 300–328 (CESL…CPYF), 329–356 (CSVL…VQEL), 357–385 (CKAL…CSSL), 386–413 (ANVL…VLQL), and 414–442 (LESL…EEQL). Serine 86 is modified (phosphoserine).

As to quaternary structure, forms high-affinity heterodimers with RNASE1, ANG and RNASE2.

It is found in the cytoplasm. The protein localises to the nucleus. In terms of biological role, ribonuclease inhibitor which inhibits RNASE1, RNASE2 and angiogenin (ANG). May play a role in redox homeostasis. Required to inhibit the cytotoxic tRNA ribonuclease activity of ANG in the cytoplasm in absence of stress. Relocates to the nucleus in response to stress, relieving inhibition of ANG in the cytoplasm, and inhibiting the angiogenic activity of ANG in the nucleus. The sequence is that of Ribonuclease inhibitor (Rnh1) from Mus musculus (Mouse).